Here is a 312-residue protein sequence, read N- to C-terminus: GDSL esterase/lipase At2g38180 (312 aa).

The signal sequence occupies residues 1 to 22 (MVGPVRPQIVLFGSSIVQYSFT). The N-linked (GlcNAc...) asparagine glycan is linked to Asn-79. The tract at residues 285-312 (EPPHPVSLCDHELTQNEQLEPPQPTARL) is disordered.

The protein belongs to the 'GDSL' lipolytic enzyme family.

The protein localises to the secreted. This Arabidopsis thaliana (Mouse-ear cress) protein is GDSL esterase/lipase At2g38180.